We begin with the raw amino-acid sequence, 214 residues long: Probable nicotinate-nucleotide adenylyltransferase (214 aa).

The protein belongs to the NadD family.

It carries out the reaction nicotinate beta-D-ribonucleotide + ATP + H(+) = deamido-NAD(+) + diphosphate. It participates in cofactor biosynthesis; NAD(+) biosynthesis; deamido-NAD(+) from nicotinate D-ribonucleotide: step 1/1. Its function is as follows. Catalyzes the reversible adenylation of nicotinate mononucleotide (NaMN) to nicotinic acid adenine dinucleotide (NaAD). This chain is Probable nicotinate-nucleotide adenylyltransferase, found in Pelodictyon phaeoclathratiforme (strain DSM 5477 / BU-1).